We begin with the raw amino-acid sequence, 120 residues long: Large ribosomal subunit protein bL12 (120 aa).

It belongs to the bacterial ribosomal protein bL12 family. As to quaternary structure, homodimer. Part of the ribosomal stalk of the 50S ribosomal subunit. Forms a multimeric L10(L12)X complex, where L10 forms an elongated spine to which 2 to 4 L12 dimers bind in a sequential fashion. Binds GTP-bound translation factors.

In terms of biological role, forms part of the ribosomal stalk which helps the ribosome interact with GTP-bound translation factors. Is thus essential for accurate translation. The chain is Large ribosomal subunit protein bL12 from Lactobacillus gasseri (strain ATCC 33323 / DSM 20243 / BCRC 14619 / CIP 102991 / JCM 1131 / KCTC 3163 / NCIMB 11718 / NCTC 13722 / AM63).